We begin with the raw amino-acid sequence, 199 residues long: COMM domain-containing protein 2 (199 aa).

Positions 123–190 constitute a COMM domain; that stretch reads SYHNLEWRLD…QALEEMKTNH (68 aa).

The protein belongs to the COMM domain-containing protein 2 family. In terms of assembly, component of the commander complex consisting of the CCC subcomplex and the retriever subcomplex. Component of the CCC (COMMD/CCDC22/CCDC93) subcomplex consisting of COMMD1, COMMD2, COMMD3, COMMD4, COMMD5, COMMD6, COMMD7, COMMD8, COMMD9, COMMD10, CCDC22 and CCDC93; within the complex forms a heterodimer with COMMD3. Interacts with RELA, RELB, NFKB1/p105, NFKB2/p100. Interacts with CCDC22, CCDC93, SCNN1B, CUL3, CUL4B, CUL5, CUL7. As to expression, ubiquitous.

The protein resides in the cytoplasm. In terms of biological role, scaffold protein in the commander complex that is essential for endosomal recycling of transmembrane cargos; the commander complex is composed of the CCC subcomplex and the retriever subcomplex. May modulate activity of cullin-RING E3 ubiquitin ligase (CRL) complexes. May down-regulate activation of NF-kappa-B. The sequence is that of COMM domain-containing protein 2 (COMMD2) from Homo sapiens (Human).